Reading from the N-terminus, the 341-residue chain is Phosphate acyltransferase (341 aa).

It belongs to the PlsX family. In terms of assembly, homodimer. Probably interacts with PlsY.

The protein localises to the cytoplasm. It carries out the reaction a fatty acyl-[ACP] + phosphate = an acyl phosphate + holo-[ACP]. The protein operates within lipid metabolism; phospholipid metabolism. Its function is as follows. Catalyzes the reversible formation of acyl-phosphate (acyl-PO(4)) from acyl-[acyl-carrier-protein] (acyl-ACP). This enzyme utilizes acyl-ACP as fatty acyl donor, but not acyl-CoA. This is Phosphate acyltransferase from Nostoc sp. (strain PCC 7120 / SAG 25.82 / UTEX 2576).